Consider the following 149-residue polypeptide: Calmodulin-like protein 3 (149 aa).

EF-hand domains are found at residues 8–43 (EQIAEFKEAFSLFDKDGDGSITTQELGTVMRSLGQN), 44–79 (PTEAELQGMVNEIDKDGNGTVDFPEFLTMMSRKMKD), 81–116 (DSEEEIREAFRVFDKDGNGFVSAAELRHVMTKLGEK), and 117–149 (LSDEEVDEMIQAADTDGDGQVNYEEFVHMLVSK). The Ca(2+) site is built by Asp21, Asp23, Asp25, Ser27, Glu32, Asp57, Asp59, Asn61, Thr63, Glu68, Asp94, Asp96, Asn98, Glu105, Asp130, Asp132, Asp134, Gln136, and Glu141.

It belongs to the calmodulin family. As to quaternary structure, interacts with MYO10, the interaction is calcium-dependent and essential for MYO10 function in filopodial extension.

May function as a specific light chain of unconventional myosin-10 (MYO10), also enhances MYO10 translation, possibly by acting as a chaperone for the emerging MYO10 heavy chain protein. May compete with calmodulin by binding, with different affinities, to cellular substrates. In Mus musculus (Mouse), this protein is Calmodulin-like protein 3 (Calml3).